The sequence spans 153 residues: UPF0756 membrane protein Bcer98_3279 (153 aa).

4 helical membrane-spanning segments follow: residues 8–28, 54–74, 87–107, and 117–137; these read FLFILLIIGLIAKNQSLIVAI, LGVTVITIAVLVPIATGEIGF, WIALASGIAVALLAKGGLQLL, and LVFGTIIAVALFNGVAVGPLI.

Belongs to the UPF0756 family.

It is found in the cell membrane. The protein is UPF0756 membrane protein Bcer98_3279 of Bacillus cytotoxicus (strain DSM 22905 / CIP 110041 / 391-98 / NVH 391-98).